The chain runs to 543 residues: MNAIGNFLVGTPVFTIFICLALGYLLGKLKIGSFTLGATVGVLIVALLIGQLGVFPRDTLLGDIFFDFFMFAIGYRVGPSFISSMKKFGAKIVYATLIFLVSAFIVAYACFKMFHIGPGIAAGIIAGGLTQSAVIGSSLETISKLPISDHLKTLYSNQIPIVYTLTYVFGTIGVLIFLRDIMPKLMHIDLKKQAVKTAKELDMIPVPVIVASTHFYTINDGSSLIGQTLGTVNTKFAKGLVAAGLNDSADMASVINAGDVLAISGGIDEIGRAVQEFNLLEVTGKTKAYVSKQVVLKKNFSADVLKNAQDKGVLVATLAGDVMDPAQFSTLKPAESVTLVGQKDAVSEVQSQLGRLRAAENIINYSWFALGIALSAALGIVGTKVSGVPIALGGGTASLIVGLVQSIYRDKHAHMDTIPDSLLEFFQSIGLNLFIATVGLSAAKTFISAIQSMGISVLLIGAVISILPHIITFVICYYLMKMEPISIIGAQTGADTLSAALNDVSERVGSDASPFFAAAVAPAYAIGNIFLTLMGPIFIVLLS.

The next 10 membrane-spanning stretches (helical) occupy residues 4–26, 33–55, 88–110, 117–139, 159–178, 362–381, 385–407, 428–450, 455–477, and 520–542; these read IGNFLVGTPVFTIFICLALGYLL, SFTLGATVGVLIVALLIGQLGVF, FGAKIVYATLIFLVSAFIVAYAC, GPGIAAGIIAGGLTQSAVIGSSL, IPIVYTLTYVFGTIGVLIFL, IINYSWFALGIALSAALGIV, VSGVPIALGGGTASLIVGLVQSI, SIGLNLFIATVGLSAAKTFISAI, ISVLLIGAVISILPHIITFVICY, and VAPAYAIGNIFLTLMGPIFIVLL.

It belongs to the AAE transporter (TC 2.A.81) family.

The protein resides in the cell membrane. In terms of biological role, catalyzes the electrogenic exchange of aspartate with alanine. This is Aspartate/alanine antiporter (aspT) from Tetragenococcus halophilus (Pediococcus halophilus).